Consider the following 92-residue polypeptide: Small ribosomal subunit protein uS19c (92 aa).

This sequence belongs to the universal ribosomal protein uS19 family.

The protein resides in the plastid. Protein S19 forms a complex with S13 that binds strongly to the 16S ribosomal RNA. The polypeptide is Small ribosomal subunit protein uS19c (Cuscuta gronovii (Common dodder)).